A 78-amino-acid chain; its full sequence is uncharacterized protein (78 aa).

The signal sequence occupies residues 1-45 (MPVIAIIAIVIIVIILNKTGVSDSLTALTLATVAALLTGGGAAGA).

To E.coli YkfL.

This is an uncharacterized protein from Escherichia coli (strain K12).